Reading from the N-terminus, the 694-residue chain is NADPH--cytochrome P450 reductase (694 aa).

Over 1-8 (MAQLDTLD) the chain is Lumenal. Residues 9-31 (LVVLAVLLVGSVAYFTKGTYWAV) traverse the membrane as a helical segment. Over 32 to 694 (AKDPYASTGP…RGRYQEDVWS (663 aa)) the chain is Cytoplasmic. The region spanning 66–220 (CVIFYGSQTG…DFLAWKEPMW (155 aa)) is the Flavodoxin-like domain. FMN-binding positions include 72-77 (SQTGTA), 123-126 (ATYG), 168-177 (LGNNTYEHYN), and Asp203. In terms of domain architecture, FAD-binding FR-type spans 276–537 (HNPFIAPIAE…HVRHSNFKLP (262 aa)). Residue Arg295 coordinates NADP(+). Residues 450–453 (RYYS), 468–470 (TAV), and 485–488 (GVTT) contribute to the FAD site. Residues Thr551, 613–614 (SR), 619–623 (KVYVQ), and Glu655 contribute to the NADP(+) site. FAD is bound at residue Trp693.

This sequence belongs to the NADPH--cytochrome P450 reductase family. In the N-terminal section; belongs to the flavodoxin family. The protein in the C-terminal section; belongs to the flavoprotein pyridine nucleotide cytochrome reductase family. Requires FAD as cofactor. It depends on FMN as a cofactor.

Its subcellular location is the endoplasmic reticulum membrane. It localises to the mitochondrion outer membrane. It is found in the cell membrane. It carries out the reaction 2 oxidized [cytochrome P450] + NADPH = 2 reduced [cytochrome P450] + NADP(+) + H(+). This enzyme is required for electron transfer from NADP to cytochrome P450 in microsomes. It can also provide electron transfer to heme oxygenase and cytochrome B5. Involved in ergosterol biosynthesis. This Aspergillus niger protein is NADPH--cytochrome P450 reductase.